Consider the following 667-residue polypeptide: Mannosyl-oligosaccharide alpha-1,2-mannosidase IA (667 aa).

Over 1-18 (MYRISPIGRKSNFHSREK) the chain is Cytoplasmic. The helical; Signal-anchor for type II membrane protein transmembrane segment at 19–39 (CLIGLVLVTLCFLCFGGIFLL) threads the bilayer. The Lumenal segment spans residues 40-667 (PDNFGSDRVL…PVTLPVSNAS (628 aa)). The disordered stretch occupies residues 154–192 (GDNAASQASSHPQSSAQQHNQQQPQLPLGGGGNDQAPDT). A compositionally biased stretch (low complexity) spans 156 to 178 (NAASQASSHPQSSAQQHNQQQPQ). N278 carries an N-linked (GlcNAc...) asparagine glycan. C483 and C515 are joined by a disulfide. The active-site Proton donor is E529. A Ca(2+)-binding site is contributed by T640.

It belongs to the glycosyl hydrolase 47 family. Ca(2+) serves as cofactor. The cofactor is Mg(2+). Complex spatial distribution during embryogenesis, including expression in lobula plate giant neurons. Also expressed in adult wing and eyes.

It is found in the golgi apparatus membrane. The catalysed reaction is N(4)-(alpha-D-Man-(1-&gt;2)-alpha-D-Man-(1-&gt;2)-alpha-D-Man-(1-&gt;3)-[alpha-D-Man-(1-&gt;2)-alpha-D-Man-(1-&gt;3)-[alpha-D-Man-(1-&gt;2)-alpha-D-Man-(1-&gt;6)]-alpha-D-Man-(1-&gt;6)]-beta-D-Man-(1-&gt;4)-beta-D-GlcNAc-(1-&gt;4)-beta-D-GlcNAc)-L-asparaginyl-[protein] (N-glucan mannose isomer 9A1,2,3B1,2,3) + 4 H2O = N(4)-(alpha-D-Man-(1-&gt;3)-[alpha-D-Man-(1-&gt;3)-[alpha-D-Man-(1-&gt;6)]-alpha-D-Man-(1-&gt;6)]-beta-D-Man-(1-&gt;4)-beta-D-GlcNAc-(1-&gt;4)-beta-D-GlcNAc)-L-asparaginyl-[protein] (N-glucan mannose isomer 5A1,2) + 4 beta-D-mannose. It carries out the reaction N(4)-(alpha-D-Man-(1-&gt;2)-alpha-D-Man-(1-&gt;2)-alpha-D-Man-(1-&gt;3)-[alpha-D-Man-(1-&gt;3)-[alpha-D-Man-(1-&gt;2)-alpha-D-Man-(1-&gt;6)]-alpha-D-Man-(1-&gt;6)]-beta-D-Man-(1-&gt;4)-beta-D-GlcNAc-(1-&gt;4)-beta-D-GlcNAc)-L-asparaginyl-[protein] (N-glucan mannose isomer 8A1,2,3B1,3) + 3 H2O = N(4)-(alpha-D-Man-(1-&gt;3)-[alpha-D-Man-(1-&gt;3)-[alpha-D-Man-(1-&gt;6)]-alpha-D-Man-(1-&gt;6)]-beta-D-Man-(1-&gt;4)-beta-D-GlcNAc-(1-&gt;4)-beta-D-GlcNAc)-L-asparaginyl-[protein] (N-glucan mannose isomer 5A1,2) + 3 beta-D-mannose. The protein operates within protein modification; protein glycosylation. Involved in the maturation of Asn-linked oligosaccharides. Progressively trim alpha-1,2-linked mannose residues from Man(9)GlcNAc(2) to produce Man(5)GlcNAc(2). The sequence is that of Mannosyl-oligosaccharide alpha-1,2-mannosidase IA from Drosophila melanogaster (Fruit fly).